Here is a 406-residue protein sequence, read N- to C-terminus: Probable endo-xylogalacturonan hydrolase A (406 aa).

The N-terminal stretch at 1 to 18 (MTLYRNLLLLASLGLSYA) is a signal peptide. A glycan (N-linked (GlcNAc...) asparagine) is linked at asparagine 84. 2 PbH1 repeats span residues 183-213 (ATNVVFSNLKMDANSKSDNPPKNTDGFDIGE) and 214-235 (STYVTITEVTVVNDDDCVALKP). Catalysis depends on aspartate 228, which acts as the Proton donor. The active site involves histidine 251. PbH1 repeat units follow at residues 266–289 (VKNIYVTGATMINSTKAAGIKTYP), 299–320 (VSNVTFTDFTVDNSDYAFQIQS), and 333–375 (PGNA…SISG). Residues asparagine 278 and asparagine 301 are each glycosylated (N-linked (GlcNAc...) asparagine).

Belongs to the glycosyl hydrolase 28 family.

The protein localises to the secreted. Functionally, pectinolytic enzyme involved in the degradation of xylogalacturonan (xga), a galacturonan backbone heavily substituted with xylose, and which is one important component of the hairy regions of pectin. Activity requires a galacturonic acid backbone substituted with xylose. This is Probable endo-xylogalacturonan hydrolase A (xghA) from Aspergillus niger (strain ATCC MYA-4892 / CBS 513.88 / FGSC A1513).